Reading from the N-terminus, the 271-residue chain is Tryptophan synthase alpha chain (271 aa).

Catalysis depends on proton acceptor residues Glu-49 and Asp-60.

Belongs to the TrpA family. Tetramer of two alpha and two beta chains.

It carries out the reaction (1S,2R)-1-C-(indol-3-yl)glycerol 3-phosphate + L-serine = D-glyceraldehyde 3-phosphate + L-tryptophan + H2O. Its pathway is amino-acid biosynthesis; L-tryptophan biosynthesis; L-tryptophan from chorismate: step 5/5. The alpha subunit is responsible for the aldol cleavage of indoleglycerol phosphate to indole and glyceraldehyde 3-phosphate. This is Tryptophan synthase alpha chain from Yersinia pestis bv. Antiqua (strain Angola).